The sequence spans 205 residues: Holliday junction branch migration complex subunit RuvA (205 aa).

Positions 1 to 64 are domain I; sequence MIGRLRGTLA…EDAHLLYGFA (64 aa). The domain II stretch occupies residues 65 to 143; that stretch reads EKRERELFRE…AWETSPAMFT (79 aa). Residues 144 to 154 are flexible linker; sequence LVSDGPLPVAS. The segment at 154-205 is domain III; that stretch reads SESSAEADAVSALVSLGYKPQEASKAIAAIKDKAGLSSEELIRRSLKGMISK.

This sequence belongs to the RuvA family. As to quaternary structure, homotetramer. Forms an RuvA(8)-RuvB(12)-Holliday junction (HJ) complex. HJ DNA is sandwiched between 2 RuvA tetramers; dsDNA enters through RuvA and exits via RuvB. An RuvB hexamer assembles on each DNA strand where it exits the tetramer. Each RuvB hexamer is contacted by two RuvA subunits (via domain III) on 2 adjacent RuvB subunits; this complex drives branch migration. In the full resolvosome a probable DNA-RuvA(4)-RuvB(12)-RuvC(2) complex forms which resolves the HJ.

Its subcellular location is the cytoplasm. Functionally, the RuvA-RuvB-RuvC complex processes Holliday junction (HJ) DNA during genetic recombination and DNA repair, while the RuvA-RuvB complex plays an important role in the rescue of blocked DNA replication forks via replication fork reversal (RFR). RuvA specifically binds to HJ cruciform DNA, conferring on it an open structure. The RuvB hexamer acts as an ATP-dependent pump, pulling dsDNA into and through the RuvAB complex. HJ branch migration allows RuvC to scan DNA until it finds its consensus sequence, where it cleaves and resolves the cruciform DNA. The chain is Holliday junction branch migration complex subunit RuvA from Pseudomonas putida (strain ATCC 47054 / DSM 6125 / CFBP 8728 / NCIMB 11950 / KT2440).